The sequence spans 316 residues: N-acetyl-gamma-glutamyl-phosphate reductase (316 aa).

Cysteine 136 is an active-site residue.

Belongs to the NAGSA dehydrogenase family. Type 1 subfamily.

It is found in the cytoplasm. The catalysed reaction is N-acetyl-L-glutamate 5-semialdehyde + phosphate + NADP(+) = N-acetyl-L-glutamyl 5-phosphate + NADPH + H(+). It participates in amino-acid biosynthesis; L-arginine biosynthesis; N(2)-acetyl-L-ornithine from L-glutamate: step 3/4. Catalyzes the NADPH-dependent reduction of N-acetyl-5-glutamyl phosphate to yield N-acetyl-L-glutamate 5-semialdehyde. This is N-acetyl-gamma-glutamyl-phosphate reductase from Xanthomonas campestris pv. campestris (strain B100).